A 203-amino-acid chain; its full sequence is Holliday junction branch migration complex subunit RuvA (203 aa).

Positions 1–64 are domain I; the sequence is MIGRLRGIVL…EDAQLLFGFN (64 aa). The interval 65–142 is domain II; it reads NKQERTLFRE…KGLHGDLFTP (78 aa). The tract at residues 143–154 is flexible linker; that stretch reads AADLVLTSPASP. Residues 155–203 are domain III; that stretch reads AVDDAEAEAVAALVSLGYKPQEASRMVSKVAQADASSETLIREALRAAL.

It belongs to the RuvA family. As to quaternary structure, homotetramer. Forms an RuvA(8)-RuvB(12)-Holliday junction (HJ) complex. HJ DNA is sandwiched between 2 RuvA tetramers; dsDNA enters through RuvA and exits via RuvB. An RuvB hexamer assembles on each DNA strand where it exits the tetramer. Each RuvB hexamer is contacted by two RuvA subunits (via domain III) on 2 adjacent RuvB subunits; this complex drives branch migration. In the full resolvosome a probable DNA-RuvA(4)-RuvB(12)-RuvC(2) complex forms which resolves the HJ.

It is found in the cytoplasm. Its function is as follows. The RuvA-RuvB-RuvC complex processes Holliday junction (HJ) DNA during genetic recombination and DNA repair, while the RuvA-RuvB complex plays an important role in the rescue of blocked DNA replication forks via replication fork reversal (RFR). RuvA specifically binds to HJ cruciform DNA, conferring on it an open structure. The RuvB hexamer acts as an ATP-dependent pump, pulling dsDNA into and through the RuvAB complex. HJ branch migration allows RuvC to scan DNA until it finds its consensus sequence, where it cleaves and resolves the cruciform DNA. The protein is Holliday junction branch migration complex subunit RuvA of Cronobacter sakazakii (strain ATCC BAA-894) (Enterobacter sakazakii).